We begin with the raw amino-acid sequence, 86 residues long: uncharacterized protein (86 aa).

2 TPR repeats span residues 8 to 41 (AEYYYKKGVEVGNKGDVEKALEYFNKAIELNPFY) and 42 to 75 (RDAWFNKALALRILGRYEEARECFFRGLAVEKHL).

This is an uncharacterized protein from Methanocaldococcus jannaschii (strain ATCC 43067 / DSM 2661 / JAL-1 / JCM 10045 / NBRC 100440) (Methanococcus jannaschii).